Consider the following 222-residue polypeptide: Eukaryotic translation initiation factor 3 subunit K (222 aa).

Residues 46 to 208 form the PCI domain; the sequence is YDLEANLAVL…KIKTKNITEK (163 aa).

This sequence belongs to the eIF-3 subunit K family. As to quaternary structure, component of the eukaryotic translation initiation factor 3 (eIF-3) complex. The eIF-3 complex interacts with pix.

It is found in the cytoplasm. Component of the eukaryotic translation initiation factor 3 (eIF-3) complex, which is involved in protein synthesis of a specialized repertoire of mRNAs and, together with other initiation factors, stimulates binding of mRNA and methionyl-tRNAi to the 40S ribosome. The eIF-3 complex specifically targets and initiates translation of a subset of mRNAs involved in cell proliferation. This Drosophila grimshawi (Hawaiian fruit fly) protein is Eukaryotic translation initiation factor 3 subunit K.